Consider the following 926-residue polypeptide: Armadillo repeat-containing protein 5 (926 aa).

The segment covering 82 to 104 (PAPSQAASGSAPSSVASAGSTPG) has biased composition (low complexity). Residues 82 to 111 (PAPSQAASGSAPSSVASAGSTPGHAPAAES) form a disordered region. 7 ARM repeats span residues 139 to 179 (GACR…NLAM), 181 to 221 (PESC…NLAD), 223 to 263 (PQHR…ELSR), 267 to 306 (RACAEQLSLGGALGPLVSLASHPKRAIREAAILILANLCA), 307 to 354 (QGLV…LCRE), 355 to 399 (AINR…DTGA), and 401 to 440 (GKLQALGLVPLLARQLCGEAGEEEEEGIEAASWDFPEERT). Ser-337 carries the post-translational modification Phosphoserine. A disordered region spans residues 472–516 (WSPERCPMPEPSESVSPTPGQTSMSTPRTLRKPGRIPAATPEEPW). Over residues 484–499 (ESVSPTPGQTSMSTPR) the composition is skewed to polar residues. The 69-residue stretch at 745 to 813 (PDLHFVLDSG…LHGCRGCGAA (69 aa)) folds into the BTB domain.

In terms of assembly, substrate-recognition component of the BCR(ARMC5) E3 ubiquitin ligase complex, at least composed of CUL3, ARMC5 and RBX1. In terms of processing, ubiquitinated by a BCR (BTB-CUL3-RBX1) E3 ubiquitin ligase complex, leading to its degradation. Deubiquitinated by USP7. In terms of tissue distribution, expression is high in the thymus, stomach, bone marrow and lymphatic tissues (including lymph nodes and intestinal wall). Also expressed in the adrenal gland, skin and in brain structures, with noticeable levels found in the cerebellum.

Its subcellular location is the nucleus. The protein resides in the chromosome. The protein localises to the cytoplasm. It functions in the pathway protein modification; protein ubiquitination. Its function is as follows. Substrate-recognition component of a BCR (BTB-CUL3-RBX1) E3 ubiquitin ligase complex that terminates RNA polymerase II (Pol II) transcription in the promoter-proximal region of genes. The BCR(ARMC5) complex provides a quality checkpoint during transcription elongation by driving premature transcription termination of transcripts that are unfavorably configured for transcriptional elongation: the BCR(ARMC5) complex acts by mediating ubiquitination of Pol II subunit POLR2A phosphorylated at 'Ser-5' of the C-terminal domain (CTD), leading to POLR2A degradation. The BCR(ARMC5) complex acts in parallel of the integrator complex and is specific for RNA Pol II originating from the promoter-proximal zone: it does not ubiquitinate elongation-stalled RNA Pol II. The BCR(ARMC5) complex also acts as a regulator of fatty acid desaturation by mediating ubiquitination and degradation of SCAP-free SREBF1 and SREBF2. Involved in fetal development, T-cell function and adrenal gland growth homeostasis. Plays a role in steroidogenesis, modulates steroidogenic enzymes expression and cortisol production. The polypeptide is Armadillo repeat-containing protein 5 (Mus musculus (Mouse)).